We begin with the raw amino-acid sequence, 324 residues long: Biotin synthase (324 aa).

Positions 43–273 (FCGNYFNFCS…HVFLRLAGGR (231 aa)) constitute a Radical SAM core domain. [4Fe-4S] cluster contacts are provided by C61, C65, and C68. The [2Fe-2S] cluster site is built by S105, C138, C198, and R268.

This sequence belongs to the radical SAM superfamily. Biotin synthase family. Homodimer. It depends on [4Fe-4S] cluster as a cofactor. The cofactor is [2Fe-2S] cluster.

It carries out the reaction (4R,5S)-dethiobiotin + (sulfur carrier)-SH + 2 reduced [2Fe-2S]-[ferredoxin] + 2 S-adenosyl-L-methionine = (sulfur carrier)-H + biotin + 2 5'-deoxyadenosine + 2 L-methionine + 2 oxidized [2Fe-2S]-[ferredoxin]. It participates in cofactor biosynthesis; biotin biosynthesis; biotin from 7,8-diaminononanoate: step 2/2. Its function is as follows. Catalyzes the conversion of dethiobiotin (DTB) to biotin by the insertion of a sulfur atom into dethiobiotin via a radical-based mechanism. The polypeptide is Biotin synthase (Campylobacter hominis (strain ATCC BAA-381 / DSM 21671 / CCUG 45161 / LMG 19568 / NCTC 13146 / CH001A)).